The primary structure comprises 375 residues: Succinyl-diaminopimelate desuccinylase (375 aa).

A Zn(2+)-binding site is contributed by H66. D68 is an active-site residue. D99 lines the Zn(2+) pocket. The active-site Proton acceptor is E133. E134, E162, and H348 together coordinate Zn(2+).

It belongs to the peptidase M20A family. DapE subfamily. As to quaternary structure, homodimer. The cofactor is Zn(2+). It depends on Co(2+) as a cofactor.

The enzyme catalyses N-succinyl-(2S,6S)-2,6-diaminopimelate + H2O = (2S,6S)-2,6-diaminopimelate + succinate. It participates in amino-acid biosynthesis; L-lysine biosynthesis via DAP pathway; LL-2,6-diaminopimelate from (S)-tetrahydrodipicolinate (succinylase route): step 3/3. In terms of biological role, catalyzes the hydrolysis of N-succinyl-L,L-diaminopimelic acid (SDAP), forming succinate and LL-2,6-diaminopimelate (DAP), an intermediate involved in the bacterial biosynthesis of lysine and meso-diaminopimelic acid, an essential component of bacterial cell walls. This Yersinia enterocolitica serotype O:8 / biotype 1B (strain NCTC 13174 / 8081) protein is Succinyl-diaminopimelate desuccinylase.